A 78-amino-acid chain; its full sequence is Acyl carrier protein (78 aa).

The Carrier domain occupies 2–77 (SDILERVRKI…DAVKFITEKT (76 aa)). S37 carries the O-(pantetheine 4'-phosphoryl)serine modification.

This sequence belongs to the acyl carrier protein (ACP) family. In terms of processing, 4'-phosphopantetheine is transferred from CoA to a specific serine of apo-ACP by AcpS. This modification is essential for activity because fatty acids are bound in thioester linkage to the sulfhydryl of the prosthetic group.

The protein resides in the cytoplasm. Its pathway is lipid metabolism; fatty acid biosynthesis. In terms of biological role, carrier of the growing fatty acid chain in fatty acid biosynthesis. This is Acyl carrier protein from Caulobacter vibrioides (strain ATCC 19089 / CIP 103742 / CB 15) (Caulobacter crescentus).